A 621-amino-acid chain; its full sequence is ATP-dependent lipid A-core flippase (621 aa).

A run of 5 helical transmembrane segments spans residues 32–52 (IVAA…LAAF), 91–111 (VWGT…LVVI), 192–212 (IVLL…FPLL), 286–306 (SPFS…IALW), and 312–332 (YTTI…YAPI). Positions 33 to 344 (VAALIAIFGV…LANISIPMQT (312 aa)) constitute an ABC transmembrane type-1 domain. In terms of domain architecture, ABC transporter spans 378–611 (FRNVDVEYRS…NGYYTMLRNI (234 aa)). Residue 410–417 (GRSGSGKS) coordinates ATP.

Belongs to the ABC transporter superfamily. Lipid exporter (TC 3.A.1.106) family. Homodimer.

Its subcellular location is the cell inner membrane. It carries out the reaction ATP + H2O + lipid A-core oligosaccharideSide 1 = ADP + phosphate + lipid A-core oligosaccharideSide 2.. Its function is as follows. Involved in lipopolysaccharide (LPS) biosynthesis. Translocates lipid A-core from the inner to the outer leaflet of the inner membrane. Transmembrane domains (TMD) form a pore in the inner membrane and the ATP-binding domain (NBD) is responsible for energy generation. This Neisseria meningitidis serogroup B (strain ATCC BAA-335 / MC58) protein is ATP-dependent lipid A-core flippase.